The following is a 177-amino-acid chain: MNYIPCMITIGNFICGLLAIHSLLYHNIHSAVLFIFTGMFLDFFDGMAARKLNAVSDMGRELDSFADLVTFGVAPSMLAYSVALYTLPFIGILCALTYSICGMLRLSKFNIEQSKLPTFIGMPIPFAGMCLVILSFTYNPILLAIGTCGLSYLMVSKIKFPHFKKHAAENLESGRWN.

Transmembrane regions (helical) follow at residues 4-24 (IPCMITIGNFICGLLAIHSLL), 28-48 (IHSAVLFIFTGMFLDFFDGMA), 77-97 (MLAYSVALYTLPFIGILCALT), 116-136 (LPTFIGMPIPFAGMCLVILSF), and 140-160 (PILLAIGTCGLSYLMVSKIKF).

Belongs to the CDP-alcohol phosphatidyltransferase class-I family.

It localises to the cell membrane. The catalysed reaction is a CDP-1,2-diacyl-sn-glycerol + L-serine = a 1,2-diacyl-sn-glycero-3-phospho-L-serine + CMP + H(+). The polypeptide is CDP-diacylglycerol--serine O-phosphatidyltransferase (pssA) (Bacillus subtilis (strain 168)).